The primary structure comprises 189 residues: MSTLAKIEALLFVRGEDWIRVRQLAELLSLPPTGIQQSLEKLSQKYEKDLDSSLDLIETGGAYRLVTKPQFSEILKEYSKAPINQSLSRPALETLSIIAYKQPITRIEIDAIRGVNSSGALAKLQAFDLIREDGKKEVLGRPNLYVTTDYFLDYMGINHLEELPVIDELEIQAQESQLFGERIEEDENQ.

This sequence belongs to the ScpB family. In terms of assembly, homodimer. Homodimerization may be required to stabilize the binding of ScpA to the Smc head domains. Component of a cohesin-like complex composed of ScpA, ScpB and the Smc homodimer, in which ScpA and ScpB bind to the head domain of Smc. The presence of the three proteins is required for the association of the complex with DNA.

The protein localises to the cytoplasm. Functionally, participates in chromosomal partition during cell division. May act via the formation of a condensin-like complex containing Smc and ScpA that pull DNA away from mid-cell into both cell halves. This chain is Segregation and condensation protein B, found in Streptococcus mitis.